The chain runs to 583 residues: Aspartate--tRNA(Asp/Asn) ligase (583 aa).

Glu173 provides a ligand contact to L-aspartate. The aspartate stretch occupies residues 197–200 (QMFK). Arg219 is an L-aspartate binding site. ATP-binding positions include 219 to 221 (RDE) and Gln228. His447 is a binding site for L-aspartate. An ATP-binding site is contributed by Glu481. Residue Arg488 coordinates L-aspartate. 533–536 (GLDR) is an ATP binding site.

It belongs to the class-II aminoacyl-tRNA synthetase family. Type 1 subfamily. As to quaternary structure, homodimer.

The protein localises to the cytoplasm. The enzyme catalyses tRNA(Asx) + L-aspartate + ATP = L-aspartyl-tRNA(Asx) + AMP + diphosphate. Its function is as follows. Aspartyl-tRNA synthetase with relaxed tRNA specificity since it is able to aspartylate not only its cognate tRNA(Asp) but also tRNA(Asn). Reaction proceeds in two steps: L-aspartate is first activated by ATP to form Asp-AMP and then transferred to the acceptor end of tRNA(Asp/Asn). This is Aspartate--tRNA(Asp/Asn) ligase from Elusimicrobium minutum (strain Pei191).